A 145-amino-acid chain; its full sequence is Beta sliding clamp (145 aa).

Belongs to the beta sliding clamp family. As to quaternary structure, forms a ring-shaped head-to-tail homodimer around DNA which binds and tethers DNA polymerases and other proteins to the DNA. The DNA replisome complex has a single clamp-loading complex (3 tau and 1 each of delta, delta', psi and chi subunits) which binds 3 Pol III cores (1 core on the leading strand and 2 on the lagging strand) each with a beta sliding clamp dimer. Additional proteins in the replisome are other copies of gamma, psi and chi, Ssb, DNA helicase and RNA primase.

It localises to the cytoplasm. Confers DNA tethering and processivity to DNA polymerases and other proteins. Acts as a clamp, forming a ring around DNA (a reaction catalyzed by the clamp-loading complex) which diffuses in an ATP-independent manner freely and bidirectionally along dsDNA. Initially characterized for its ability to contact the catalytic subunit of DNA polymerase III (Pol III), a complex, multichain enzyme responsible for most of the replicative synthesis in bacteria; Pol III exhibits 3'-5' exonuclease proofreading activity. The beta chain is required for initiation of replication as well as for processivity of DNA replication. In Vibrio harveyi (Beneckea harveyi), this protein is Beta sliding clamp (dnaN).